Consider the following 636-residue polypeptide: Molybdenum cofactor biosynthesis protein 1 (636 aa).

The molybdenum cofactor biosynthesis protein A stretch occupies residues 1 to 383 (MAARPLSRML…QMKNRPMILI (383 aa)). Serine 64 carries the post-translational modification Phosphoserine. The region spanning 64–277 (SFGRQHSYLR…LDTVRQQWPE (214 aa)) is the Radical SAM core domain. Arginine 73 contacts GTP. Residues cysteine 80 and cysteine 84 each coordinate [4Fe-4S] cluster. S-adenosyl-L-methionine is bound at residue tyrosine 86. Cysteine 87 lines the [4Fe-4S] cluster pocket. Arginine 123 contributes to the GTP binding site. Glycine 127 is a binding site for S-adenosyl-L-methionine. Position 154 (threonine 154) interacts with GTP. Serine 178 is a binding site for S-adenosyl-L-methionine. Lysine 198 is modified (N6-acetyllysine). Lysine 215 contacts GTP. Methionine 249 lines the S-adenosyl-L-methionine pocket. Residues cysteine 312 and cysteine 315 each coordinate [4Fe-4S] cluster. 317 to 319 (RLR) serves as a coordination point for GTP. Cysteine 329 is a binding site for [4Fe-4S] cluster. Positions 414-636 (MSFSSQVATL…GGQRGDFHRA (223 aa)) are molybdenum cofactor biosynthesis protein C. A disordered region spans residues 456-480 (DANSKCLSPGSWASAAPSGPQLTSE). Positions 463–475 (SPGSWASAAPSGP) are enriched in low complexity. An N6-acetyllysine modification is found at lysine 528. The active-site For molybdenum cofactor biosynthesis protein C activity is aspartate 606.

The protein in the C-terminal section; belongs to the MoaC family. This sequence in the N-terminal section; belongs to the radical SAM superfamily. MoaA family. Isoform MOCS1A and isoform MOCS1B probably form a heterooligomer. [4Fe-4S] cluster serves as cofactor. As to expression, isoform MOCS1A and isoform 2 are widely expressed.

It catalyses the reaction GTP + AH2 + S-adenosyl-L-methionine = (8S)-3',8-cyclo-7,8-dihydroguanosine 5'-triphosphate + 5'-deoxyadenosine + L-methionine + A + H(+). The catalysed reaction is (8S)-3',8-cyclo-7,8-dihydroguanosine 5'-triphosphate = cyclic pyranopterin phosphate + diphosphate. Its pathway is cofactor biosynthesis; molybdopterin biosynthesis. Its function is as follows. Isoform MOCS1A and isoform MOCS1B probably form a complex that catalyzes the conversion of 5'-GTP to cyclic pyranopterin monophosphate (cPMP). MOCS1A catalyzes the cyclization of GTP to (8S)-3',8-cyclo-7,8-dihydroguanosine 5'-triphosphate and MOCS1B catalyzes the subsequent conversion of (8S)-3',8-cyclo-7,8-dihydroguanosine 5'-triphosphate to cPMP. The protein is Molybdenum cofactor biosynthesis protein 1 (MOCS1) of Homo sapiens (Human).